The primary structure comprises 151 residues: uncharacterized protein (151 aa).

Positions 1 to 151 (MAELASIIRP…SSKTTTLKAR (151 aa)) are disordered. Low complexity predominate over residues 33–45 (STGLSDLLMLLQS). Positions 53–64 (RARRRTVCRPRR) are enriched in basic residues. Residues 108–123 (SSSSNTSSGTATSGES) are compositionally biased toward low complexity. Basic and acidic residues predominate over residues 126 to 141 (ADWRDSSSASDDDRIP).

This is an uncharacterized protein from Aotus trivirgatus (Three-striped night monkey).